A 218-amino-acid chain; its full sequence is N-(5'-phosphoribosyl)anthranilate isomerase (218 aa).

The protein belongs to the TrpF family.

It carries out the reaction N-(5-phospho-beta-D-ribosyl)anthranilate = 1-(2-carboxyphenylamino)-1-deoxy-D-ribulose 5-phosphate. It participates in amino-acid biosynthesis; L-tryptophan biosynthesis; L-tryptophan from chorismate: step 3/5. The protein is N-(5'-phosphoribosyl)anthranilate isomerase of Alcanivorax borkumensis (strain ATCC 700651 / DSM 11573 / NCIMB 13689 / SK2).